The following is a 460-amino-acid chain: Jacalin-related lectin 36 (460 aa).

Residues 1–131 enclose the Jacalin-type lectin 1 domain; the sequence is MAAATMSWDD…LNSIDVHFAP (131 aa). At alanine 2 the chain carries N-acetylalanine. 3 disordered regions span residues 34–57, 133–162, and 291–334; these read YDGDTHNPHHHGTPGKKSDGVSLS, PSSSSSSSSLSQANKVDAQGGKGGTSWDDG, and SGRG…PHEG. A compositionally biased stretch (low complexity) spans 133-143; the sequence is PSSSSSSSSLS. Residues 145–289 form the Jacalin-type lectin 2 domain; it reads ANKVDAQGGK…LNALGAYFAP (145 aa). A compositionally biased stretch (polar residues) spans 292-309; sequence GRGTPSATQPPGSAQPTG. In terms of domain architecture, Jacalin-type lectin 3 spans 313-457; sequence AKKLEAKGGN…IHQVGVHVKP (145 aa).

The protein belongs to the jacalin lectin family.

In Arabidopsis thaliana (Mouse-ear cress), this protein is Jacalin-related lectin 36 (JAL36).